The primary structure comprises 215 residues: Thiamine-phosphate synthase (215 aa).

Residues 43-47 and N75 each bind 4-amino-2-methyl-5-(diphosphooxymethyl)pyrimidine; that span reads QLRDK. Mg(2+) contacts are provided by D76 and D95. A 4-amino-2-methyl-5-(diphosphooxymethyl)pyrimidine-binding site is contributed by S114. A 2-[(2R,5Z)-2-carboxy-4-methylthiazol-5(2H)-ylidene]ethyl phosphate-binding site is contributed by 141–143; the sequence is TPT. K144 lines the 4-amino-2-methyl-5-(diphosphooxymethyl)pyrimidine pocket. Residue G172 coordinates 2-[(2R,5Z)-2-carboxy-4-methylthiazol-5(2H)-ylidene]ethyl phosphate.

It belongs to the thiamine-phosphate synthase family. Mg(2+) serves as cofactor.

The enzyme catalyses 2-[(2R,5Z)-2-carboxy-4-methylthiazol-5(2H)-ylidene]ethyl phosphate + 4-amino-2-methyl-5-(diphosphooxymethyl)pyrimidine + 2 H(+) = thiamine phosphate + CO2 + diphosphate. It carries out the reaction 2-(2-carboxy-4-methylthiazol-5-yl)ethyl phosphate + 4-amino-2-methyl-5-(diphosphooxymethyl)pyrimidine + 2 H(+) = thiamine phosphate + CO2 + diphosphate. It catalyses the reaction 4-methyl-5-(2-phosphooxyethyl)-thiazole + 4-amino-2-methyl-5-(diphosphooxymethyl)pyrimidine + H(+) = thiamine phosphate + diphosphate. Its pathway is cofactor biosynthesis; thiamine diphosphate biosynthesis; thiamine phosphate from 4-amino-2-methyl-5-diphosphomethylpyrimidine and 4-methyl-5-(2-phosphoethyl)-thiazole: step 1/1. In terms of biological role, condenses 4-methyl-5-(beta-hydroxyethyl)thiazole monophosphate (THZ-P) and 2-methyl-4-amino-5-hydroxymethyl pyrimidine pyrophosphate (HMP-PP) to form thiamine monophosphate (TMP). This Streptomyces avermitilis (strain ATCC 31267 / DSM 46492 / JCM 5070 / NBRC 14893 / NCIMB 12804 / NRRL 8165 / MA-4680) protein is Thiamine-phosphate synthase.